We begin with the raw amino-acid sequence, 484 residues long: D-aminoacylase (484 aa).

The protein belongs to the metallo-dependent hydrolases superfamily. N-acyl-D-amino-acid deacylase family. The cofactor is Zn(2+).

The protein resides in the cytoplasm. It catalyses the reaction an N-acyl-D-amino acid + H2O = a D-alpha-amino acid + a carboxylate. Functionally, has a wide specificity; hydrolyzes N-acyl derivative of neutral D-amino acids. This chain is D-aminoacylase (dan), found in Alcaligenes xylosoxydans xylosoxydans (Achromobacter xylosoxidans).